The chain runs to 229 residues: ATPase SWSAP1 (229 aa).

The disordered stretch occupies residues 209–229; it reads PWPTQAGDPSSGKGSSSGGQP.

As to quaternary structure, interacts with ZSWIM7; they form a functional complex involved in homologous recombination repair and stabilize each other. Interacts with RAD51, RAD51B, RAD51C, RAD51D and XRCC3; involved in homologous recombination repair.

It is found in the nucleus. Functionally, ATPase which is preferentially stimulated by single-stranded DNA and is involved in homologous recombination repair (HRR). Has a DNA-binding activity which is independent of its ATPase activity. The polypeptide is ATPase SWSAP1 (SWSAP1) (Homo sapiens (Human)).